The sequence spans 184 residues: ATP synthase subunit b, chloroplastic (184 aa).

Residues 27-49 (LATNPINLSVVLGVLIFFGKGVL) traverse the membrane as a helical segment.

The protein belongs to the ATPase B chain family. As to quaternary structure, F-type ATPases have 2 components, F(1) - the catalytic core - and F(0) - the membrane proton channel. F(1) has five subunits: alpha(3), beta(3), gamma(1), delta(1), epsilon(1). F(0) has four main subunits: a(1), b(1), b'(1) and c(10-14). The alpha and beta chains form an alternating ring which encloses part of the gamma chain. F(1) is attached to F(0) by a central stalk formed by the gamma and epsilon chains, while a peripheral stalk is formed by the delta, b and b' chains.

It is found in the plastid. The protein localises to the chloroplast thylakoid membrane. Functionally, f(1)F(0) ATP synthase produces ATP from ADP in the presence of a proton or sodium gradient. F-type ATPases consist of two structural domains, F(1) containing the extramembraneous catalytic core and F(0) containing the membrane proton channel, linked together by a central stalk and a peripheral stalk. During catalysis, ATP synthesis in the catalytic domain of F(1) is coupled via a rotary mechanism of the central stalk subunits to proton translocation. In terms of biological role, component of the F(0) channel, it forms part of the peripheral stalk, linking F(1) to F(0). This Cucumis sativus (Cucumber) protein is ATP synthase subunit b, chloroplastic.